Reading from the N-terminus, the 178-residue chain is Ribosome maturation factor RimM (178 aa).

In terms of domain architecture, PRC barrel spans 101–178 (ADEYYWYQLV…VMRVEWDADF (78 aa)).

It belongs to the RimM family. As to quaternary structure, binds ribosomal protein uS19.

It localises to the cytoplasm. Functionally, an accessory protein needed during the final step in the assembly of 30S ribosomal subunit, possibly for assembly of the head region. Essential for efficient processing of 16S rRNA. May be needed both before and after RbfA during the maturation of 16S rRNA. It has affinity for free ribosomal 30S subunits but not for 70S ribosomes. This Pseudomonas putida (strain GB-1) protein is Ribosome maturation factor RimM.